The sequence spans 125 residues: Mitochondrial import inner membrane translocase subunit tim16-A (125 aa).

Residues Glu-58–Glu-110 form a J-like region.

This sequence belongs to the TIM16/PAM16 family. Probable component of the PAM complex at least composed of 1 mitochondrial HSP70 protein, 1 GRPE, 1 TIMM44, 1 TIMM16/PAM16 and 1 TIMM14. Associates with the TIM23 complex.

It is found in the mitochondrion inner membrane. Its function is as follows. Regulates ATP-dependent protein translocation into the mitochondrial matrix. This is Mitochondrial import inner membrane translocase subunit tim16-A (pam16-a) from Xenopus laevis (African clawed frog).